The primary structure comprises 387 residues: GTPase Obg (387 aa).

An Obg domain is found at 1 to 159 (MKFVDEAVIR…RSLRLELMLL (159 aa)). The region spanning 160–333 (ADVGLLGMPN…LALKLMDFID (174 aa)) is the OBG-type G domain. GTP-binding positions include 166–173 (GMPNAGKS), 191–195 (FTTLV), 213–216 (DIPG), 283–286 (NKTD), and 314–316 (SAY). The Mg(2+) site is built by S173 and T193.

It belongs to the TRAFAC class OBG-HflX-like GTPase superfamily. OBG GTPase family. Monomer. It depends on Mg(2+) as a cofactor.

The protein localises to the cytoplasm. Its function is as follows. An essential GTPase which binds GTP, GDP and possibly (p)ppGpp with moderate affinity, with high nucleotide exchange rates and a fairly low GTP hydrolysis rate. Plays a role in control of the cell cycle, stress response, ribosome biogenesis and in those bacteria that undergo differentiation, in morphogenesis control. The sequence is that of GTPase Obg from Shewanella loihica (strain ATCC BAA-1088 / PV-4).